A 198-amino-acid chain; its full sequence is Protein LKAAEAR1 (198 aa).

A disordered region spans residues 1–47; the sequence is MPTLGVKGARERDKNSASGAGAGAGAGAGAGEKHRKGPRTTDPPKTG. A compositionally biased stretch (gly residues) spans 20-30; the sequence is AGAGAGAGAGA.

This is Protein LKAAEAR1 (Lkaaear1) from Mus musculus (Mouse).